A 56-amino-acid polypeptide reads, in one-letter code: uncharacterized protein (56 aa).

Residues histidine 21–proline 38 show a composition bias toward basic residues. The interval histidine 21–histidine 40 is disordered.

This is an uncharacterized protein from Saccharomyces cerevisiae (strain ATCC 204508 / S288c) (Baker's yeast).